The primary structure comprises 376 residues: UDP-N-acetylglucosamine 2-epimerase (376 aa).

Residues arginine 10, lysine 15, aspartate 95, glutamate 117, histidine 213, glutamine 271, phenylalanine 276, 290–292 (SGG), glutamate 296, and arginine 313 contribute to the substrate site.

This sequence belongs to the UDP-N-acetylglucosamine 2-epimerase family. In terms of assembly, homodimer.

It is found in the cytoplasm. The enzyme catalyses UDP-N-acetyl-alpha-D-glucosamine = UDP-N-acetyl-alpha-D-mannosamine. It functions in the pathway bacterial outer membrane biogenesis; enterobacterial common antigen biosynthesis. Its function is as follows. Catalyzes the reversible epimerization at C-2 of UDP-N-acetylglucosamine (UDP-GlcNAc) and thereby provides bacteria with UDP-N-acetylmannosamine (UDP-ManNAc), the activated donor of ManNAc residues. In Escherichia coli O157:H7, this protein is UDP-N-acetylglucosamine 2-epimerase.